Here is a 232-residue protein sequence, read N- to C-terminus: Ubiquinone biosynthesis O-methyltransferase (232 aa).

The S-adenosyl-L-methionine site is built by R36, G55, D76, and M120.

The protein belongs to the methyltransferase superfamily. UbiG/COQ3 family.

The enzyme catalyses a 3-demethylubiquinol + S-adenosyl-L-methionine = a ubiquinol + S-adenosyl-L-homocysteine + H(+). The catalysed reaction is a 3-(all-trans-polyprenyl)benzene-1,2-diol + S-adenosyl-L-methionine = a 2-methoxy-6-(all-trans-polyprenyl)phenol + S-adenosyl-L-homocysteine + H(+). It participates in cofactor biosynthesis; ubiquinone biosynthesis. In terms of biological role, O-methyltransferase that catalyzes the 2 O-methylation steps in the ubiquinone biosynthetic pathway. This chain is Ubiquinone biosynthesis O-methyltransferase, found in Burkholderia vietnamiensis (strain G4 / LMG 22486) (Burkholderia cepacia (strain R1808)).